A 205-amino-acid polypeptide reads, in one-letter code: FMN-dependent NADH:quinone oxidoreductase (205 aa).

FMN is bound by residues Ser10, 16 to 18 (SHS), and 96 to 99 (MYNF).

The protein belongs to the azoreductase type 1 family. As to quaternary structure, homodimer. Requires FMN as cofactor.

It catalyses the reaction 2 a quinone + NADH + H(+) = 2 a 1,4-benzosemiquinone + NAD(+). The enzyme catalyses N,N-dimethyl-1,4-phenylenediamine + anthranilate + 2 NAD(+) = 2-(4-dimethylaminophenyl)diazenylbenzoate + 2 NADH + 2 H(+). Quinone reductase that provides resistance to thiol-specific stress caused by electrophilic quinones. In terms of biological role, also exhibits azoreductase activity. Catalyzes the reductive cleavage of the azo bond in aromatic azo compounds to the corresponding amines. The polypeptide is FMN-dependent NADH:quinone oxidoreductase (Nostoc punctiforme (strain ATCC 29133 / PCC 73102)).